A 547-amino-acid polypeptide reads, in one-letter code: MGGCIPFLKAARALCPRIMPPLLLLSAFIFLVSVLGGAPGHNPDRRTKMVSIHSLSELERLKLQETAYHELVARHFLSEFKPDRALPIDRPNTLDKWFLILRGQQRAVSHKTFGISLEEVLVNEFTRRKHLELTATMQVEEATGQAAGRRRGNVVRRVFGRIRRFFSRRRNEPTLPREFTRRGRRGAVSVDSLAELEDGALLLQTLQLSKISFPIGQRLLGSKRKMSLNPIAKQIPQVVEACCQFIEKHGLSAVGIFTLEYSVQRVRQLREEFDQGLDVVLDDNQNVHDVAALLKEFFRDMKDSLLPDDLYMSFLLTATLKPQDQLSALQLLVYLMPPCHSDTLERLLKALHKITENCEDSIGIDGQLVPGNRMTSTNLALVFGSALLKKGKFGKRESRKTKLGIDHYVASVNVVRAMIDNWDVLFQVPPHIQRQVAKRVWKSSPEALDFIRRRNLRKIQSARIKMEEDALLSDPVETSAEARAAVLAQSKPSDEGSSEEPAVPSGTARSHDDEEGAGNPPIPEQDRPLLRVPREKEAKTGVSYFFP.

The signal sequence occupies residues 1 to 40 (MGGCIPFLKAARALCPRIMPPLLLLSAFIFLVSVLGGAPG). Residues 226-426 (MSLNPIAKQI…AMIDNWDVLF (201 aa)) enclose the Rho-GAP domain. The segment at 485 to 547 (AVLAQSKPSD…AKTGVSYFFP (63 aa)) is disordered. Basic and acidic residues predominate over residues 524–539 (EQDRPLLRVPREKEAK).

In terms of assembly, may interacts (via the Rho-GAP domain) with the active form of RAC1. As to expression, detected in the outer root sheath of hair follicles at the level of the stem cell bulge, during the anagen and telogen phases of hair growth (at protein level).

GTPase activator for the Rho-type GTPases by converting them to an inactive GDP-bound state. The polypeptide is Rho GTPase-activating protein 36 (ARHGAP36) (Homo sapiens (Human)).